Here is a 204-residue protein sequence, read N- to C-terminus: dITP/XTP pyrophosphatase (204 aa).

11–16 (SRNRKK) lines the substrate pocket. D76 functions as the Proton acceptor in the catalytic mechanism. D76 is a binding site for Mg(2+). Residues S77, 158 to 161 (FGYD), K181, and 186 to 187 (HR) contribute to the substrate site.

This sequence belongs to the HAM1 NTPase family. Homodimer. Requires Mg(2+) as cofactor.

The catalysed reaction is XTP + H2O = XMP + diphosphate + H(+). It catalyses the reaction dITP + H2O = dIMP + diphosphate + H(+). It carries out the reaction ITP + H2O = IMP + diphosphate + H(+). Pyrophosphatase that catalyzes the hydrolysis of nucleoside triphosphates to their monophosphate derivatives, with a high preference for the non-canonical purine nucleotides XTP (xanthosine triphosphate), dITP (deoxyinosine triphosphate) and ITP. Seems to function as a house-cleaning enzyme that removes non-canonical purine nucleotides from the nucleotide pool, thus preventing their incorporation into DNA/RNA and avoiding chromosomal lesions. This chain is dITP/XTP pyrophosphatase, found in Mycobacterium tuberculosis (strain CDC 1551 / Oshkosh).